The chain runs to 293 residues: D-alanine--D-alanine ligase (293 aa).

The ATP-grasp domain maps to 98–291 (KIIWEQHSLT…FNKLVTSIIN (194 aa)). 124 to 177 (NFPLPWAVKPTLEGSSIGISKVDNQMQLNDALMLAWQYAPYALIEQWIKGDEYT) contacts ATP. Mg(2+)-binding residues include Asp-245, Glu-258, and Asn-260.

Belongs to the D-alanine--D-alanine ligase family. Mg(2+) serves as cofactor. Mn(2+) is required as a cofactor.

It is found in the cytoplasm. The catalysed reaction is 2 D-alanine + ATP = D-alanyl-D-alanine + ADP + phosphate + H(+). Its pathway is cell wall biogenesis; peptidoglycan biosynthesis. Cell wall formation. The protein is D-alanine--D-alanine ligase of Vesicomyosocius okutanii subsp. Calyptogena okutanii (strain HA).